The sequence spans 507 residues: MTSTKDKTAITPTRENDYPEWYQQVVKASDLAENSPVRGSMVIKPWGYGIWENIQRQLDDRIKETGHENAYFPLFIPLSFLEKEAAHIEGFAKECAVVTHHRLEEKDGRLIPAGPLEEPLIVRPTSETIIGDSFSRWVESYRDLPLLINQWANVVRWEMRPRIFLRTTEFLWQEGHTAHATHEEALQETMTMLEVYRSFVEDVLAIPVIVGEKSPGERFPGAENTFTLEAMMQDRKALQSCTSHYLGQNFAKGSNIRFSNMEGQLEYAYTTSWGMTTRLIGSLIMCHGDDDGLRLPPRIAHKQIVIVPVIPKPELEAQVLEYAENLAAELRKQIFYGKPLTVHIDKRDKRGGEKNWEWVKKGVPLRLEVGPRDINEQAVMVARRDQSPKNKQSLPKQQFVQQAASILEDIQRNYYVQAATYRDQHIYRHLETFEEMRAFFTPKNEEKPEIHGGFVLAKWCGDPVTEEMLSDLKVTIRCLPVKQSGTKGRCILTGREATLDAIFAKSY.

The protein belongs to the class-II aminoacyl-tRNA synthetase family. ProS type 3 subfamily. As to quaternary structure, homodimer.

It localises to the cytoplasm. The enzyme catalyses tRNA(Pro) + L-proline + ATP = L-prolyl-tRNA(Pro) + AMP + diphosphate. Its function is as follows. Catalyzes the attachment of proline to tRNA(Pro) in a two-step reaction: proline is first activated by ATP to form Pro-AMP and then transferred to the acceptor end of tRNA(Pro). The chain is Proline--tRNA ligase from Protochlamydia amoebophila (strain UWE25).